The primary structure comprises 167 residues: Fimbrial adapter PapF (167 aa).

Positions 1 to 18 are cleaved as a signal peptide; the sequence is MIRLSLFISLLLTSVAVL.

It is found in the secreted. It localises to the fimbrium. In terms of biological role, adapter that links the PapG adhesin to the distal end of the tip fibrillum. PapF is required for the correct presentation of the adhesin at the distal end of the tip fibrillum. Pili are polar filaments radiating from the surface of the bacterium to a length of 0.5-1.5 micrometers and numbering 100-300 per cell, and enable bacteria to colonize the epithelium of specific host organs. This is Fimbrial adapter PapF (papF) from Escherichia coli.